The primary structure comprises 246 residues: tRNA (guanine-N(7)-)-methyltransferase (246 aa).

Residues E77, E102, D129, and D152 each coordinate S-adenosyl-L-methionine. The active site involves D152. Residues K156, D188, and 225-228 (TKFE) contribute to the substrate site.

It belongs to the class I-like SAM-binding methyltransferase superfamily. TrmB family.

It catalyses the reaction guanosine(46) in tRNA + S-adenosyl-L-methionine = N(7)-methylguanosine(46) in tRNA + S-adenosyl-L-homocysteine. The protein operates within tRNA modification; N(7)-methylguanine-tRNA biosynthesis. Catalyzes the formation of N(7)-methylguanine at position 46 (m7G46) in tRNA. The sequence is that of tRNA (guanine-N(7)-)-methyltransferase from Haemophilus influenzae (strain PittGG).